A 70-amino-acid polypeptide reads, in one-letter code: Protein SlyX homolog (70 aa).

It belongs to the SlyX family.

This chain is Protein SlyX homolog, found in Rhizobium meliloti (strain 1021) (Ensifer meliloti).